A 294-amino-acid chain; its full sequence is Nucleotide-binding protein Swol_0262 (294 aa).

15 to 22 (GLSGAGKT) provides a ligand contact to ATP. Position 65 to 68 (65 to 68 (DVRG)) interacts with GTP.

This sequence belongs to the RapZ-like family.

Functionally, displays ATPase and GTPase activities. This chain is Nucleotide-binding protein Swol_0262, found in Syntrophomonas wolfei subsp. wolfei (strain DSM 2245B / Goettingen).